Consider the following 1269-residue polypeptide: Histone-lysine N-methyltransferase SETDB1 (1269 aa).

The stretch at 9–63 forms a coiled coil; the sequence is KELGISMDDLRELIDRELEKIEFVKQRKAQLLEMEQLVKQKEAEVDHVDKLFDNA. 2 disordered regions span residues 85-121 and 153-188; these read YKESSSEDEGSSKPTEVIEIPDEDDDDVMSVGSGEAV and QKKSDGPQTRFSSHPSSPTSSVGGSNQASASNDMSK. The segment covering 103 to 112 has biased composition (acidic residues); it reads EIPDEDDDDV. A compositionally biased stretch (low complexity) spans 164–177; that stretch reads SSHPSSPTSSVGGS. 2 Tudor domains span residues 250–312 and 340–395; these read ENLT…RPWS and VLLK…MFSM. Residues 396-414 are compositionally biased toward polar residues; it reads KTSNASTQEKQQAGQQRTR. Residues 396–516 are disordered; that stretch reads KTSNASTQEK…FQSNQSVQPV (121 aa). A compositionally biased stretch (low complexity) spans 462 to 476; sequence DSQQAQSKKQVAKKS. The segment covering 486 to 497 has biased composition (polar residues); it reads SGQSSPIPTESV. The MBD domain occupies 620 to 691; it reads HRGKNPLLVP…EMFCLDPYVL (72 aa). One can recognise a Pre-SET domain in the interval 753–826; sequence VGCDCTDGCR…MCNNRLVQHG (74 aa). Residues cysteine 755, cysteine 757, cysteine 761, cysteine 767, cysteine 769, cysteine 807, cysteine 811, cysteine 813, and cysteine 818 each coordinate Zn(2+). Residues 829-1244 form the SET domain; sequence VRLQLFKTQN…AGTELTWDYN (416 aa). S-adenosyl-L-methionine is bound by residues 839 to 841, aspartate 877, and tyrosine 879; that span reads KGW. The segment at 894 to 1139 is disordered; that stretch reads EGYESDAKSS…VAASAGPVKR (246 aa). The span at 919-932 shows a compositional bias: acidic residues; sequence SGSEDQEESNDSSD. Basic and acidic residues-rich tracts occupy residues 968–989 and 1021–1033; these read ASKDSRTRDETTDCKLPEETSK and ETDKPKESEEASK. Over residues 1078–1094 the composition is skewed to low complexity; the sequence is TEEVLTLSSSSDSEVGS. The span at 1106 to 1120 shows a compositional bias: polar residues; that stretch reads ATANDSDDIQTISSG. Residues arginine 1198 and 1201–1202 contribute to the S-adenosyl-L-methionine site; that span reads NH. Cysteine 1204, cysteine 1257, cysteine 1259, and cysteine 1264 together coordinate Zn(2+). The region spanning 1253–1269 is the Post-SET domain; it reads KKLLCCCGSTECRGRLL.

It belongs to the class V-like SAM-binding methyltransferase superfamily. Histone-lysine methyltransferase family. Suvar3-9 subfamily.

It is found in the nucleus. It localises to the chromosome. The catalysed reaction is N(6),N(6)-dimethyl-L-lysyl(9)-[histone H3] + S-adenosyl-L-methionine = N(6),N(6),N(6)-trimethyl-L-lysyl(9)-[histone H3] + S-adenosyl-L-homocysteine + H(+). Functionally, histone methyltransferase that specifically trimethylates 'Lys-9' of histone H3. H3 'Lys-9' trimethylation represents a specific tag for epigenetic transcriptional repression by recruiting HP1 (CBX1, CBX3 and/or CBX5) proteins to methylated histones. Mainly functions in euchromatin regions, thereby playing a central role in the silencing of euchromatic genes. H3 'Lys-9' trimethylation is coordinated with DNA methylation. Plays a role in promoter hypermethylation and transcriptional silencing of tumor suppressor genes (TSGs) or other tumor-related genes. Also required to maintain a transcriptionally repressive state of genes in undifferentiated embryonic stem cells (ESCs). Associates at promoter regions of tumor suppressor genes (TSGs) leading to their gene silencing. The chain is Histone-lysine N-methyltransferase SETDB1 (setdb1) from Xenopus laevis (African clawed frog).